The chain runs to 228 residues: L-ribulose-5-phosphate 4-epimerase UlaF (228 aa).

Substrate contacts are provided by residues 26–27 (GN), 43–44 (SG), and 72–73 (SS). Residues Asp-74, His-93, and His-95 each contribute to the Zn(2+) site. The active-site Proton donor/acceptor is Asp-118. Position 167 (His-167) interacts with Zn(2+). Tyr-225 serves as the catalytic Proton donor/acceptor.

It belongs to the aldolase class II family. AraD/FucA subfamily. It depends on Zn(2+) as a cofactor.

The enzyme catalyses L-ribulose 5-phosphate = D-xylulose 5-phosphate. It participates in cofactor degradation; L-ascorbate degradation; D-xylulose 5-phosphate from L-ascorbate: step 4/4. Its function is as follows. Catalyzes the isomerization of L-ribulose 5-phosphate to D-xylulose 5-phosphate. Is involved in the anaerobic L-ascorbate utilization. The chain is L-ribulose-5-phosphate 4-epimerase UlaF from Escherichia coli (strain ATCC 8739 / DSM 1576 / NBRC 3972 / NCIMB 8545 / WDCM 00012 / Crooks).